A 106-amino-acid polypeptide reads, in one-letter code: Small ribosomal subunit protein bS6 (106 aa).

This sequence belongs to the bacterial ribosomal protein bS6 family.

Binds together with bS18 to 16S ribosomal RNA. The sequence is that of Small ribosomal subunit protein bS6 from Cyanothece sp. (strain PCC 7425 / ATCC 29141).